The chain runs to 195 residues: Dihydroneopterin triphosphate diphosphatase (195 aa).

The active-site Proton acceptor is the aspartate 73.

Belongs to the HAM1 NTPase family. It depends on Mn(2+) as a cofactor.

It carries out the reaction 7,8-dihydroneopterin 3'-triphosphate + H2O = 7,8-dihydroneopterin 3'-phosphate + diphosphate + H(+). It participates in cofactor biosynthesis; tetrahydrofolate biosynthesis. Functionally, pyrophosphatase involved in the biosynthesis of tetrahydrofolate. Catalyzes the hydrolysis of dihydroneopterin triphosphate (DHNTP) to dihydroneopterin monophosphate (DHNMP) and pyrophosphate. Shows a strict substrate specificity. Has only weak activity with GTP, ITP, XTP and dTTP, and cannot use ATP, UTP, CTP, NAD(+), NADH, diadenosine triphosphate, diadenosine tetraphosphate, ADP-ribose and UDP-glucose. The polypeptide is Dihydroneopterin triphosphate diphosphatase (Limosilactobacillus reuteri (strain DSM 20016) (Lactobacillus reuteri)).